The following is a 264-amino-acid chain: Regulatory protein RecX (264 aa).

It belongs to the RecX family.

Its subcellular location is the cytoplasm. Its function is as follows. Modulates RecA activity. The protein is Regulatory protein RecX of Lacticaseibacillus casei (strain BL23) (Lactobacillus casei).